A 398-amino-acid chain; its full sequence is Circumsporozoite protein (398 aa).

A signal peptide spans 1–23 (MKNFNLLAVSSILLVDLFRTQWG). The segment at 50–110 (AQVRQSASRG…AAAGEAGNNA (61 aa)) is disordered. Basic and acidic residues predominate over residues 66-93 (PKNEEGADKPKKKDEKQVEPKKPRENKL). Positions 81–89 (KQVEPKKPR) are required for the binding to heparan sulfate proteoglycans (HSPGs) on the surface of host hepatocytes. The segment at 92-96 (KLKQP) is region I; contains the proteolytic cleavage site. 19 consecutive repeat copies span residues 97–105 (AGNNAAAGE), 106–114 (AGNNAAAGE), 115–123 (AGNNAAAGE), 124–132 (AGNNAAAGE), 133–141 (AGNNAAAGE), 142–150 (AGNNAAAGE), 151–159 (AGNNAAGGA), 160–168 (AGNNAAGGE), 169–177 (AGNNAAGGA), 178–186 (AGNNAAAGE), 187–195 (AGNNAAGGE), 196–204 (AGNNAAAGE), 205–213 (AGNNAAGGA), 214–222 (AGNNAAAGE), 223–231 (AGNNAAAGA), 232–240 (AGNNAAAGA), 241–257 (AGNN…GAGR), 258–274 (AGNN…GAGR), and 275–291 (AGNN…GAGG). Low complexity predominate over residues 97–110 (AGNNAAAGEAGNNA). Residues 97–240 (AGNNAAAGEA…AAGNNAAAGA (144 aa)) form a 16 X 9 AA tandem repeats of A-G-N-N-A-A-[AG]-G-[EA] region. The tract at residues 241–291 (AGNNAAAGEAGAGGAGRAGNNAAAGEAGAGGAGRAGNNAAAGEAGAGGAGG) is 3 X 17 AA tandem repeats of A-G-N-N-A-A-A-G-E-A-G-A-G-G-A-G-[RG]. The disordered stretch occupies residues 248-310 (GEAGAGGAGR…AGQGQNNGGA (63 aa)). Gly residues predominate over residues 284 to 293 (AGAGGAGGNA). The 53-residue stretch at 324 to 376 (KIRSTIGVEWSPCSVTCGKGVRMRRKVNAANKKPEELDANDLETEVCTMDKCA) folds into the TSP type-1 domain. 2 disulfides stabilise this stretch: Cys-336–Cys-370 and Cys-340–Cys-375. The O-linked (Fuc) threonine glycan is linked to Thr-339. A lipid anchor (GPI-anchor amidated cysteine) is attached at Cys-375. Positions 376 to 398 (AGIFNVVSNSLGLVILLVLALFN) are cleaved as a propeptide — removed in mature form.

The protein belongs to the plasmodium circumsporozoite protein family. During host cell invasion, proteolytically cleaved at the cell membrane in the region I by a papain-like cysteine protease of parasite origin. Cleavage is triggered by the sporozoite contact with highly sulfated heparan sulfate proteoglycans (HSPGs) present on the host hepatocyte cell surface. Cleavage exposes the TSP type-1 (TSR) domain and is required for productive invasion of host hepatocytes but not for adhesion to the host cell membrane. Cleavage is dispensable for sporozoite development in the oocyst, motility and for traversal of host and vector cells. Post-translationally, O-glycosylated; maybe by POFUT2.

The protein resides in the cell membrane. The protein localises to the cytoplasm. In terms of biological role, essential sporozoite protein. In the mosquito vector, required for sporozoite development in the oocyst, migration through the vector hemolymph and entry into the vector salivary glands. In the vertebrate host, required for sporozoite migration through the host dermis and infection of host hepatocytes. Binds to highly sulfated heparan sulfate proteoglycans (HSPGs) on the surface of host hepatocytes. In the vertebrate host, binds to highly sulfated heparan sulfate proteoglycans (HSPGs) on the surface of host hepatocytes and is required for sporozoite invasion of the host hepatocytes. The protein is Circumsporozoite protein of Plasmodium cynomolgi (strain Ceylon).